The primary structure comprises 330 residues: Protein pelota homolog (330 aa).

The protein belongs to the eukaryotic release factor 1 family. Pelota subfamily. As to quaternary structure, monomer. Requires a divalent metal cation as cofactor.

The protein resides in the cytoplasm. Functionally, may function in recognizing stalled ribosomes, interact with stem-loop structures in stalled mRNA molecules, and effect endonucleolytic cleavage of the mRNA. May play a role in the release non-functional ribosomes and degradation of damaged mRNAs. Has endoribonuclease activity. The chain is Protein pelota homolog from Pyrobaculum islandicum (strain DSM 4184 / JCM 9189 / GEO3).